We begin with the raw amino-acid sequence, 1710 residues long: Neurexin-2 (1710 aa).

The first 28 residues, 1–28 (MALGSRWQPPPQLPPLLLLLALAAGVRG), serve as a signal peptide directing secretion. Residues 29 to 206 (LEFGGGPGQW…LRGAAADPLC (178 aa)) enclose the Laminin G-like 1 domain. Residues 29–1634 (LEFGGGPGQW…EVIRESSSTT (1606 aa)) lie on the Extracellular side of the membrane. An N-linked (GlcNAc...) asparagine glycan is attached at Asn60. The 41-residue stretch at 202-242 (ADPLCAPARNPCANGGLCTVLAPGEVGCDCSHTGFGGKFCS) folds into the EGF-like 1 domain. 3 disulfides stabilise this stretch: Cys206–Cys219, Cys213–Cys229, and Cys231–Cys241. Laminin G-like domains lie at 289–486 (VATF…SFRC) and 493–686 (DPVT…APFC). Asp335 is a binding site for Ca(2+). A glycan (N-linked (GlcNAc...) asparagine) is linked at Asn338. Residues Leu352 and Met420 each contribute to the Ca(2+) site. Intrachain disulfides connect Cys450–Cys486, Cys657–Cys686, Cys694–Cys705, Cys699–Cys714, and Cys716–Cys726. Residues 690–727 (TLKQCASAPCRNGGICREGWNRFVCDCIGTGFLGRVCE) enclose the EGF-like 2 domain. Laminin G-like domains follow at residues 732–904 (VLSY…ITYC) and 918–1093 (DPVT…ERGC). The Ca(2+) site is built by Asp779 and Leu796. N-linked (GlcNAc...) asparagine glycosylation is present at Asn841. Position 854 (Arg854) interacts with Ca(2+). Cystine bridges form between Cys1065-Cys1093, Cys1100-Cys1111, Cys1105-Cys1120, and Cys1122-Cys1132. Positions 1096-1133 (PSTTCTEESCANQGVCLQQWDGFTCDCTMTSYGGPVCN) constitute an EGF-like 3 domain. The region spanning 1137–1345 (TTYIFGKGGA…HLRLVGEGPS (209 aa)) is the Laminin G-like 6 domain. Ca(2+) contacts are provided by Asp1189, Val1206, Ile1288, and Asn1290. The O-linked (Xyl...) (heparan sulfate) serine glycan is linked to Ser1400. 2 disordered regions span residues 1458 to 1508 (ATQD…LPPT) and 1587 to 1621 (EPRRPPPLRPGVTSAPGFPRLPTANPTGPGERGPP). Residues 1635 to 1655 (GMVVGIVAAAALCILILLYAM) traverse the membrane as a helical segment. At 1656–1710 (YKYRNRDEGSYQVDQSRNYISNSAQSNGAVVKEKAPAAPKTPSKAKKNKDKEYYV) the chain is on the cytoplasmic side. Positions 1677–1710 (NSAQSNGAVVKEKAPAAPKTPSKAKKNKDKEYYV) are disordered.

In terms of assembly, the laminin G-like domain 1 binds to NXPH1. Interacts with PATJ. Interacts with CBLN1, CBLN2 and, less avidly, with CBLN4. Specific isoforms bind neuroligins NLGN1, NLGN2 and NLGN3. Specific isoforms bind to alpha-dystroglycan. Interacts (via Laminin G-like 1 domain) with IGSF21 (Ig-like 1 domain) in a trans-interaction manner. Interacts with CLSTN3. In terms of processing, O-glycosylated; contains heparan sulfate. Heparan sulfate attachment is required for synapse development by mediating interactions with neuroligins.

The protein resides in the presynaptic cell membrane. In terms of biological role, neuronal cell surface protein that may be involved in cell recognition and cell adhesion. May mediate intracellular signaling. The protein is Neurexin-2 of Mus musculus (Mouse).